Reading from the N-terminus, the 361-residue chain is Phosphoserine aminotransferase (361 aa).

R43 provides a ligand contact to L-glutamate. Pyridoxal 5'-phosphate contacts are provided by residues 77-78, W103, T153, D173, and Q196; that span reads AS. K197 carries the post-translational modification N6-(pyridoxal phosphate)lysine. 238–239 contributes to the pyridoxal 5'-phosphate binding site; the sequence is NT.

It belongs to the class-V pyridoxal-phosphate-dependent aminotransferase family. SerC subfamily. Homodimer. It depends on pyridoxal 5'-phosphate as a cofactor.

It is found in the cytoplasm. It carries out the reaction O-phospho-L-serine + 2-oxoglutarate = 3-phosphooxypyruvate + L-glutamate. The enzyme catalyses 4-(phosphooxy)-L-threonine + 2-oxoglutarate = (R)-3-hydroxy-2-oxo-4-phosphooxybutanoate + L-glutamate. Its pathway is amino-acid biosynthesis; L-serine biosynthesis; L-serine from 3-phospho-D-glycerate: step 2/3. The protein operates within cofactor biosynthesis; pyridoxine 5'-phosphate biosynthesis; pyridoxine 5'-phosphate from D-erythrose 4-phosphate: step 3/5. Functionally, catalyzes the reversible conversion of 3-phosphohydroxypyruvate to phosphoserine and of 3-hydroxy-2-oxo-4-phosphonooxybutanoate to phosphohydroxythreonine. The chain is Phosphoserine aminotransferase from Azotobacter vinelandii (strain DJ / ATCC BAA-1303).